The chain runs to 737 residues: Exostosin-1c (737 aa).

The Cytoplasmic portion of the chain corresponds to 1-6; the sequence is MQARKK. The helical; Signal-anchor for type II membrane protein transmembrane segment at 7 to 27 threads the bilayer; that stretch reads YVLLGLCTCCWILLYYWAGLQ. The Lumenal portion of the chain corresponds to 28 to 737; it reads ERLLGLITHR…RKRYKDLERV (710 aa). Asparagine 194 and asparagine 322 each carry an N-linked (GlcNAc...) asparagine glycan. Residues arginine 432, arginine 540, aspartate 556, glutamate 557, aspartate 558, glutamate 644, aspartate 645, and arginine 692 each coordinate UDP-N-acetyl-alpha-D-glucosamine. Aspartate 558 provides a ligand contact to Mn(2+). Cysteine 643 and cysteine 695 are disulfide-bonded. Aspartate 645 is a catalytic residue.

The protein belongs to the glycosyltransferase 47 family. Requires Mn(2+) as cofactor.

The protein resides in the endoplasmic reticulum membrane. It catalyses the reaction 3-O-{[(1-&gt;4)-beta-D-GlcA-(1-&gt;4)-alpha-D-GlcNAc](n)-(1-&gt;4)-beta-D-GlcA-(1-&gt;3)-beta-D-Gal-(1-&gt;3)-beta-D-Gal-(1-&gt;4)-beta-D-Xyl}-L-seryl-[protein] + UDP-N-acetyl-alpha-D-glucosamine = 3-O-{alpha-D-GlcNAc-[(1-&gt;4)-beta-D-GlcA-(1-&gt;4)-alpha-D-GlcNAc](n)-(1-&gt;4)-beta-D-GlcA-(1-&gt;3)-beta-D-Gal-(1-&gt;3)-beta-D-Gal-(1-&gt;4)-beta-D-Xyl}-L-seryl-[protein] + UDP + H(+). The enzyme catalyses 3-O-{alpha-D-GlcNAc-[(1-&gt;4)-beta-D-GlcA-(1-&gt;4)-alpha-D-GlcNAc](n)-(1-&gt;4)-beta-D-GlcA-(1-&gt;3)-beta-D-Gal-(1-&gt;3)-beta-D-Gal-(1-&gt;4)-beta-D-Xyl}-L-seryl-[protein] + UDP-alpha-D-glucuronate = 3-O-{[(1-&gt;4)-beta-D-GlcA-(1-&gt;4)-alpha-D-GlcNAc](n+1)-(1-&gt;4)-beta-D-GlcA-(1-&gt;3)-beta-D-Gal-(1-&gt;3)-beta-D-Gal-(1-&gt;4)-beta-D-Xyl}-L-seryl-[protein] + UDP + H(+). The protein operates within protein modification; protein glycosylation. Its function is as follows. Glycosyltransferase required for the biosynthesis of heparan-sulfate. The protein is Exostosin-1c (ext1c) of Danio rerio (Zebrafish).